Consider the following 175-residue polypeptide: Urease accessory protein UreE (175 aa).

A disordered region spans residues 134–175 (FQPESGAYGGGHHHGDESATDLHNPGHGPHRSVPKIHEFKPR).

The protein belongs to the UreE family.

It is found in the cytoplasm. In terms of biological role, involved in urease metallocenter assembly. Binds nickel. Probably functions as a nickel donor during metallocenter assembly. The protein is Urease accessory protein UreE of Dechloromonas aromatica (strain RCB).